A 145-amino-acid chain; its full sequence is Brain and acute leukemia cytoplasmic protein (145 aa).

Residue Gly-2 is the site of N-myristoyl glycine attachment. Residue Cys-3 is the site of S-palmitoyl cysteine attachment. Positions 3 to 35 (CGGSRADAIEPRYYESWTRETESTWLTYTDSDA) are interaction with CAMK2A. 2 disordered regions span residues 36–56 (LPSA…AGVL) and 87–109 (CPNS…WATE). Residues 87-105 (CPNSQNLSSGPLTQKQNGL) show a composition bias toward polar residues.

In terms of assembly, interacts with CAMK2A. Palmitoylation and myristoylation target the protein to the lipid rafts. In terms of tissue distribution, at the mRNA level, predominantly expressed in the brain. At the protein level, mainly expressed in muscle tissues. In skeletal muscles, expressed in cranial and facial muscles, muscles of the neck, back, thoracic wall, and thigh. Also found in the contractile myoepithelial cell layer of salivary glands. In smooth muscles, expressed in the gastric wall, uterus, urinary bladder, as well as in the muscular lining around seminiferous tubules, prostatic ducts, epididymis, vas deferens, walls of small blood vessels in the dermis, and fascial layers between muscle fibers, brain, and around the spinal cord. Strongly expressed in myocardium. High expression levels are observed in placental spongiotrophoblast and adjacent myometrium. Also expressed in bone marrow hematopoietic cells. In the mature thymus, expressed in rare scattered cells. Weakly expressed in the brain neuropil, particularly near the hippocampus, and spinal cord white matter. Not detected in skin keratinocytes or lung (at protein level).

The protein resides in the cytoplasm. It is found in the synapse. Its subcellular location is the synaptosome. The protein localises to the membrane raft. It localises to the postsynaptic density. Its function is as follows. May play a synaptic role at the postsynaptic lipid rafts possibly through interaction with CAMK2A. This is Brain and acute leukemia cytoplasmic protein (Baalc) from Mus musculus (Mouse).